Consider the following 82-residue polypeptide: Cytochrome b559 subunit alpha (82 aa).

The helical transmembrane segment at 22–36 (IIHAVTLPAIFIAGF) threads the bilayer. His-24 serves as a coordination point for heme.

This sequence belongs to the PsbE/PsbF family. Heterodimer of an alpha subunit and a beta subunit. PSII is composed of 1 copy each of membrane proteins PsbA, PsbB, PsbC, PsbD, PsbE, PsbF, PsbH, PsbI, PsbJ, PsbK, PsbL, PsbM, PsbT, PsbX, PsbY, Psb30/Ycf12, peripheral proteins PsbO, CyanoQ (PsbQ), PsbU, PsbV and a large number of cofactors. It forms dimeric complexes. It depends on heme b as a cofactor.

It localises to the cellular thylakoid membrane. In terms of biological role, this b-type cytochrome is tightly associated with the reaction center of photosystem II (PSII). PSII is a light-driven water:plastoquinone oxidoreductase that uses light energy to abstract electrons from H(2)O, generating O(2) and a proton gradient subsequently used for ATP formation. It consists of a core antenna complex that captures photons, and an electron transfer chain that converts photonic excitation into a charge separation. The polypeptide is Cytochrome b559 subunit alpha (Prochlorococcus marinus (strain MIT 9211)).